The chain runs to 235 residues: MRKQRIVIKISGACLKQNDSSIIDFIKINDLAEQIEKISKKYIVSIVLGGGNIWRGSIAKELDMDRNLADNMGMMATIINGLALENALNHLNVNTIVLSAIKCDKLVHESSANNIKKAIEKEQVMIFVAGTGFPYFTTDSCAAIRAAETESSIILMGKNGVDGVYDSDPKINPNAQFYEHITFNMALTQNLKVMDATALALCQENNINLLVFNIDKPNAIVDVLEKKNKYTIVSK.

Residue 9–12 (KISG) coordinates ATP. Gly50 contacts UMP. 2 residues coordinate ATP: Gly51 and Arg55. UMP contacts are provided by residues Asp70 and 131–138 (TGFPYFTT). Positions 159, 165, and 168 each coordinate ATP.

Belongs to the UMP kinase family. In terms of assembly, homohexamer; trimer of dimers.

It localises to the cytoplasm. The catalysed reaction is UMP + ATP = UDP + ADP. It participates in pyrimidine metabolism; CTP biosynthesis via de novo pathway; UDP from UMP (UMPK route): step 1/1. With respect to regulation, unlike other bacteria, is not activated by GTP. UTP is a competitive inhibitor against UMP and a non-competitive inhibitor toward ATP. Its function is as follows. Catalyzes the reversible phosphorylation of UMP to UDP, with ATP as the most efficient phosphate donor. Is also able to phosphorylate dUMP. This Ureaplasma parvum serovar 3 (strain ATCC 700970) protein is Uridylate kinase (pyrH).